The chain runs to 1439 residues: Fanconi anemia group A protein homolog (1439 aa).

Residues Met-1–Lys-20 form a disordered region. Positions Arg-19 to Tyr-35 match the Nuclear localization signal motif.

Belongs to the multisubunit FA complex composed of FANCA, FANCB, FANCC, FANCE, FANCF, FANCG, FANCL/PHF9 and FANCM. In complex with FANCF, FANCG and FANCL, but not with FANCC, nor FANCE, interacts with HES1; this interaction may be essential for the stability and nuclear localization of FA core complex proteins. The complex with FANCC and FANCG may also include EIF2AK2 and HSP70. Interacts with FAAP20; interaction is direct. In terms of processing, phosphorylated primarily on serine residues. Phosphorylation is required for the formation of the nuclear complex. In terms of tissue distribution, mainly expressed in testis and lymphoid tissues like thymus, lymph nodes, and spleen, and at lower levels in kidney and ovary.

It localises to the nucleus. Its subcellular location is the cytoplasm. Functionally, DNA repair protein that may operate in a postreplication repair or a cell cycle checkpoint function. May be involved in interstrand DNA cross-link repair and in the maintenance of normal chromosome stability. The protein is Fanconi anemia group A protein homolog (Fanca) of Mus musculus (Mouse).